The sequence spans 722 residues: Glycine--tRNA ligase beta subunit (722 aa).

It belongs to the class-II aminoacyl-tRNA synthetase family. As to quaternary structure, tetramer of two alpha and two beta subunits.

The protein resides in the cytoplasm. The enzyme catalyses tRNA(Gly) + glycine + ATP = glycyl-tRNA(Gly) + AMP + diphosphate. The polypeptide is Glycine--tRNA ligase beta subunit (Haemophilus influenzae (strain 86-028NP)).